We begin with the raw amino-acid sequence, 343 residues long: MTGIISTDVLIVGAGPVGLFAVFELGLFDMKCHLIDILDKPGGQCAELYPEKPIYDIPGWPSISAQGLVDKLLEQIHPFKPDFTYNRMVSSLEKLEDGSFRVTTDENEVFEAKVVVIAAGGGSFQPKRPPIPGIEPYEGKSVFYSVRRMEDFRGHDLVIVGGGDSALDWTLNLQPVAKSVTLVHRRPEFRAAPDSVNKMYAMQEMKQLEFRVGQVTGLTGADGQLSSATIKGGPDGDIEVPCTRMLPFFGLTMKLGPIAEWGLNLHENLIPVDTEKFQTSVPGIFAVGDINSYPGKLKLILSGFHEVALMAQAAKRIVSPGERIVFQYTTSSTSLQKKLGVVG.

Residues D36, Q44, Y49, V89, F124, D289, and T330 each contribute to the FAD site.

The protein belongs to the ferredoxin--NADP reductase type 2 family. As to quaternary structure, homodimer. FAD serves as cofactor.

It catalyses the reaction 2 reduced [2Fe-2S]-[ferredoxin] + NADP(+) + H(+) = 2 oxidized [2Fe-2S]-[ferredoxin] + NADPH. This is Ferredoxin--NADP reductase from Mesorhizobium japonicum (strain LMG 29417 / CECT 9101 / MAFF 303099) (Mesorhizobium loti (strain MAFF 303099)).